Reading from the N-terminus, the 395-residue chain is Phosphoglycerate kinase (395 aa).

Substrate is bound by residues 22 to 24 (DFN), Arg-38, 61 to 64 (HLGR), Arg-119, and Arg-152. ATP-binding positions include Lys-203, Gly-294, Glu-325, and 351 to 354 (GGDT).

This sequence belongs to the phosphoglycerate kinase family. As to quaternary structure, monomer.

It is found in the cytoplasm. It catalyses the reaction (2R)-3-phosphoglycerate + ATP = (2R)-3-phospho-glyceroyl phosphate + ADP. It functions in the pathway carbohydrate degradation; glycolysis; pyruvate from D-glyceraldehyde 3-phosphate: step 2/5. The polypeptide is Phosphoglycerate kinase (Hydrogenobaculum sp. (strain Y04AAS1)).